The primary structure comprises 459 residues: Putrescine aminotransferase (459 aa).

Pyridoxal 5'-phosphate-binding positions include 150–151 (GT) and Q274. N6-(pyridoxal phosphate)lysine is present on K300. Residue T332 coordinates pyridoxal 5'-phosphate.

It belongs to the class-III pyridoxal-phosphate-dependent aminotransferase family. Putrescine aminotransferase subfamily. Requires pyridoxal 5'-phosphate as cofactor.

The catalysed reaction is an alkane-alpha,omega-diamine + 2-oxoglutarate = an omega-aminoaldehyde + L-glutamate. The enzyme catalyses putrescine + 2-oxoglutarate = 1-pyrroline + L-glutamate + H2O. It catalyses the reaction cadaverine + 2-oxoglutarate = 5-aminopentanal + L-glutamate. The protein operates within amine and polyamine degradation; putrescine degradation; 4-aminobutanal from putrescine (transaminase route): step 1/1. Functionally, catalyzes the aminotransferase reaction from putrescine to 2-oxoglutarate, leading to glutamate and 4-aminobutanal, which spontaneously cyclizes to form 1-pyrroline. This is the first step in one of two pathways for putrescine degradation, where putrescine is converted into 4-aminobutanoate (gamma-aminobutyrate or GABA) via 4-aminobutanal. Also functions as a cadaverine transaminase in a a L-lysine degradation pathway to succinate that proceeds via cadaverine, glutarate and L-2-hydroxyglutarate. This chain is Putrescine aminotransferase, found in Salmonella paratyphi A (strain ATCC 9150 / SARB42).